A 460-amino-acid chain; its full sequence is ATP synthase subunit beta (460 aa).

ATP is bound at residue 150-157; that stretch reads GGAGVGKT.

This sequence belongs to the ATPase alpha/beta chains family. F-type ATPases have 2 components, CF(1) - the catalytic core - and CF(0) - the membrane proton channel. CF(1) has five subunits: alpha(3), beta(3), gamma(1), delta(1), epsilon(1). CF(0) has three main subunits: a(1), b(2) and c(9-12). The alpha and beta chains form an alternating ring which encloses part of the gamma chain. CF(1) is attached to CF(0) by a central stalk formed by the gamma and epsilon chains, while a peripheral stalk is formed by the delta and b chains.

Its subcellular location is the cell inner membrane. It carries out the reaction ATP + H2O + 4 H(+)(in) = ADP + phosphate + 5 H(+)(out). In terms of biological role, produces ATP from ADP in the presence of a proton gradient across the membrane. The catalytic sites are hosted primarily by the beta subunits. In Citrobacter koseri (strain ATCC BAA-895 / CDC 4225-83 / SGSC4696), this protein is ATP synthase subunit beta.